Here is a 962-residue protein sequence, read N- to C-terminus: Translation initiation factor IF-2 (962 aa).

A disordered region spans residues 99–365 (VKAAQTQAAP…GKKGKKLKLE (267 aa)). The segment covering 117–141 (DAAKARAEAAARAEARAKAEAEAAK) has biased composition (basic and acidic residues). The span at 145–155 (AKAGNKAKPAA) shows a compositional bias: low complexity. The span at 173–216 (KPAEESKAEKAQADKMPSKKPAEPKEKAAKPKHERNGKGKDAKK) shows a compositional bias: basic and acidic residues. Low complexity predominate over residues 219 to 234 (KPAAPAVPQPVVSAEE). Residues 235–269 (QAQRDEEARRAAALRAHQEALLKEKQERQARREAM) are compositionally biased toward basic and acidic residues. Over residues 270-283 (KQQAEQQAKAAQEA) the composition is skewed to low complexity. Over residues 338-354 (GGRDRNNARNGDDERVR) the composition is skewed to basic and acidic residues. The tr-type G domain maps to 462–631 (PRPPVVTVMG…LLEAEVLELT (170 aa)). Residues 471–478 (GHVDHGKT) are G1. Position 471–478 (471–478 (GHVDHGKT)) interacts with GTP. Residues 496 to 500 (GITQH) form a G2 region. Residues 517–520 (DTPG) form a G3 region. GTP is bound by residues 517–521 (DTPGH) and 571–574 (NKID). A G4 region spans residues 571–574 (NKID). Positions 607-609 (SAK) are G5.

The protein belongs to the TRAFAC class translation factor GTPase superfamily. Classic translation factor GTPase family. IF-2 subfamily.

Its subcellular location is the cytoplasm. Its function is as follows. One of the essential components for the initiation of protein synthesis. Protects formylmethionyl-tRNA from spontaneous hydrolysis and promotes its binding to the 30S ribosomal subunits. Also involved in the hydrolysis of GTP during the formation of the 70S ribosomal complex. This is Translation initiation factor IF-2 from Neisseria meningitidis serogroup C (strain 053442).